The primary structure comprises 169 residues: MQTRLRVYITGEPGVGKTTIFLKVIDKLKSQGYSISGFYCPEVREKGQRIGFKIKSLDNEVEDWLASIYAKSSIKIGKYYITINEDIINKIKEKISKSEIIGIDEIGPMELSVPKLKEIIDYVLNEKPIVVAVVHRKISFKDGKTFVVTYENRNRLDNEIFNYIISSIQ.

Residues 11–18 (GEPGVGKT) and 100–107 (IIGIDEIG) each bind ATP.

It belongs to the THEP1 NTPase family.

It carries out the reaction a ribonucleoside 5'-triphosphate + H2O = a ribonucleoside 5'-diphosphate + phosphate + H(+). In terms of biological role, has nucleotide phosphatase activity towards ATP, GTP, CTP, TTP and UTP. May hydrolyze nucleoside diphosphates with lower efficiency. This is Nucleoside-triphosphatase THEP1 from Sulfurisphaera tokodaii (strain DSM 16993 / JCM 10545 / NBRC 100140 / 7) (Sulfolobus tokodaii).